The chain runs to 1342 residues: DNA-directed RNA polymerase subunit beta (1342 aa).

Belongs to the RNA polymerase beta chain family. The RNAP catalytic core consists of 2 alpha, 1 beta, 1 beta' and 1 omega subunit. When a sigma factor is associated with the core the holoenzyme is formed, which can initiate transcription.

It catalyses the reaction RNA(n) + a ribonucleoside 5'-triphosphate = RNA(n+1) + diphosphate. In terms of biological role, DNA-dependent RNA polymerase catalyzes the transcription of DNA into RNA using the four ribonucleoside triphosphates as substrates. This Histophilus somni (strain 2336) (Haemophilus somnus) protein is DNA-directed RNA polymerase subunit beta.